A 299-amino-acid chain; its full sequence is Protoheme IX farnesyltransferase (299 aa).

A run of 9 helical transmembrane segments spans residues 26–46 (VNALIVFCAVIGMFLAVPDGL), 53–73 (FAATVGIACVAGAAAAMNCLI), 94–114 (LHSVEVLVFAGVLGGFGLSVL), 121–141 (LTMWLTLATFVGYAVIYTLLL), 149–169 (IVIGGASGAMPPVLGWAAVSG), 175–195 (ALLLFLIIFAWTPPHFWSLAL), 217–239 (YTRLSVLLYTCALFGVTLLPFAI), 243–265 (GWIYLVAAVTLGLRFVHYAWRLL), and 277–297 (FRFSIVYLSLLFAALLADHYL).

The protein belongs to the UbiA prenyltransferase family. Protoheme IX farnesyltransferase subfamily.

It is found in the cell inner membrane. The catalysed reaction is heme b + (2E,6E)-farnesyl diphosphate + H2O = Fe(II)-heme o + diphosphate. It participates in porphyrin-containing compound metabolism; heme O biosynthesis; heme O from protoheme: step 1/1. Functionally, converts heme B (protoheme IX) to heme O by substitution of the vinyl group on carbon 2 of heme B porphyrin ring with a hydroxyethyl farnesyl side group. This is Protoheme IX farnesyltransferase from Azoarcus sp. (strain BH72).